A 269-amino-acid chain; its full sequence is Hydroxyethylthiazole kinase (269 aa).

Position 45 (M45) interacts with substrate. R121 and T167 together coordinate ATP. G194 is a binding site for substrate.

Belongs to the Thz kinase family. The cofactor is Mg(2+).

The catalysed reaction is 5-(2-hydroxyethyl)-4-methylthiazole + ATP = 4-methyl-5-(2-phosphooxyethyl)-thiazole + ADP + H(+). The protein operates within cofactor biosynthesis; thiamine diphosphate biosynthesis; 4-methyl-5-(2-phosphoethyl)-thiazole from 5-(2-hydroxyethyl)-4-methylthiazole: step 1/1. Functionally, catalyzes the phosphorylation of the hydroxyl group of 4-methyl-5-beta-hydroxyethylthiazole (THZ). This chain is Hydroxyethylthiazole kinase, found in Bacillus licheniformis (strain ATCC 14580 / DSM 13 / JCM 2505 / CCUG 7422 / NBRC 12200 / NCIMB 9375 / NCTC 10341 / NRRL NRS-1264 / Gibson 46).